A 187-amino-acid chain; its full sequence is Calmodulin-like protein 1 (187 aa).

Ala-2 carries the N-acetylalanine modification. EF-hand domains follow at residues 8–43, 44–79, 81–116, and 117–152; these read EQIGEFREAFSLFDKDGDGSITTKELGTVMRSLGQN, PTEAELQDMISEVDTDSNGNIEFKEFLGLMARKLRD, DSEEELKEAFRVFDKDQNGFISATELRHVMANIGER, and LTDEEVGEMISEADVDGDGQINYEEFVKCMMAKKRR. Ca(2+)-binding residues include Asp-21, Asp-23, Asp-25, Ser-27, Glu-32, Asp-57, Asp-59, Asn-61, Asn-63, Glu-68, Asp-94, Asp-96, Asn-98, Glu-105, Asp-130, Asp-132, Asp-134, Gln-136, and Glu-141. The interval 153–187 is disordered; that stretch reads KRIEEKRDHDGGSRTKSAGPSAAPASKRGQKCVIL. Basic and acidic residues predominate over residues 154–165; that stretch reads RIEEKRDHDGGS. Low complexity predominate over residues 169–178; the sequence is SAGPSAAPAS. Cys-184 is subject to Cysteine methyl ester. Cys-184 is lipidated: S-farnesyl cysteine. Positions 185-187 are cleaved as a propeptide — removed in mature form; it reads VIL.

This sequence belongs to the calmodulin family.

Its subcellular location is the membrane. In terms of biological role, calcium-binding protein that binds and activates CAMK1, a calcium/calmodulin-dependent kinase. This Oryza sativa subsp. japonica (Rice) protein is Calmodulin-like protein 1 (CML1).